The following is a 330-amino-acid chain: Ferredoxin--NADP reductase (330 aa).

FAD contacts are provided by threonine 18, glutamate 37, glutamine 45, tyrosine 50, valine 90, phenylalanine 124, aspartate 286, and threonine 327.

This sequence belongs to the ferredoxin--NADP reductase type 2 family. Homodimer. The cofactor is FAD.

It carries out the reaction 2 reduced [2Fe-2S]-[ferredoxin] + NADP(+) + H(+) = 2 oxidized [2Fe-2S]-[ferredoxin] + NADPH. In Halalkalibacterium halodurans (strain ATCC BAA-125 / DSM 18197 / FERM 7344 / JCM 9153 / C-125) (Bacillus halodurans), this protein is Ferredoxin--NADP reductase.